The following is a 143-amino-acid chain: Hemoglobin subunit alpha (143 aa).

Serine 2 bears the N-acetylserine mark. A Globin domain is found at 2 to 143; the sequence is SLSDKDKAAV…LALALSEKYR (142 aa). Histidine 60 is an O2 binding site. Residue histidine 89 coordinates heme b.

It belongs to the globin family. Heterotetramer of two alpha chains and two beta chains. As to expression, red blood cells.

Involved in oxygen transport from gills to the various peripheral tissues. The polypeptide is Hemoglobin subunit alpha (hba) (Cyprinus carpio (Common carp)).